Here is a 381-residue protein sequence, read N- to C-terminus: GDP-mannose-dependent monoacylated alpha-(1-6)-phosphatidylinositol monomannoside mannosyltransferase (381 aa).

GDP-alpha-D-mannose-binding residues include arginine 206, lysine 211, leucine 261, and glutamate 298.

Belongs to the glycosyltransferase group 1 family. Glycosyltransferase 4 subfamily.

It carries out the reaction a 1,2-diacyl-sn-glycero-3-phospho-[alpha-D-mannopyranosyl-(1&lt;-&gt;6)-D-myo-inositol] + GDP-alpha-D-mannose = a 2,6-O-bis(alpha-D-mannopyranosyl)-1-phosphatidyl-1D-myo-inositol + GDP + H(+). The enzyme catalyses a 1,2-diacyl-sn-glycero-3-phospho-[alpha-D-6-acyl-mannopyranosyl-(1&lt;-&gt;6)-D-myo-inositol] + GDP-alpha-D-mannose = a 2-O-(alpha-D-mannosyl)-6-O-(6-O-acyl-alpha-D-mannosyl)-1-phosphatidyl-1D-myo-inositol + GDP + H(+). Its pathway is phospholipid metabolism; phosphatidylinositol metabolism. Involved in the biosynthesis of phosphatidyl-myo-inositol mannosides (PIM) which are early precursors in the biosynthesis of lipomannans (LM) and lipoarabinomannans (LAM). Catalyzes the addition of a mannosyl residue from GDP-D-mannose (GDP-Man) to the position 6 of a phosphatidyl-myo-inositol bearing an alpha-1,2-linked mannose residue (PIM1) to generate phosphatidyl-myo-inositol bearing alpha-1,2- and alpha-1,6-linked mannose residues (Ac1PIM2). PimB also catalyzes the addition of a mannosyl residue from GDP-Man to the position 6 of phosphatidyl-myo-inositol bearing an acylated alpha-1,2-linked mannose residue (Ac1PIM1) to generate monoacylated phosphatidyl-myo-inositol bearing alpha-1,2- and alpha-1,6-linked mannose residues (Ac1PIM2). The addition of the second mannosyl residue by PimB preferentially occurs before the acylation of the mannosyl residue transferred by PimA. Also able to transfer a mannosyl residue from GDP-Man to the position 6 of a phosphatidyl-myo-inositol (PI), but this reaction is very slow. The chain is GDP-mannose-dependent monoacylated alpha-(1-6)-phosphatidylinositol monomannoside mannosyltransferase from Corynebacterium glutamicum (strain ATCC 13032 / DSM 20300 / JCM 1318 / BCRC 11384 / CCUG 27702 / LMG 3730 / NBRC 12168 / NCIMB 10025 / NRRL B-2784 / 534).